Here is a 326-residue protein sequence, read N- to C-terminus: tRNA-modifying protein YgfZ (326 aa).

Residues tryptophan 27 and tryptophan 189 each contribute to the folate site.

It belongs to the tRNA-modifying YgfZ family.

Its subcellular location is the cytoplasm. Its function is as follows. Folate-binding protein involved in regulating the level of ATP-DnaA and in the modification of some tRNAs. It is probably a key factor in regulatory networks that act via tRNA modification, such as initiation of chromosomal replication. In Salmonella paratyphi C (strain RKS4594), this protein is tRNA-modifying protein YgfZ.